We begin with the raw amino-acid sequence, 233 residues long: 7-cyano-7-deazaguanine synthase (233 aa).

7–17 (CSGGLDSVSLA) provides a ligand contact to ATP. Residues cysteine 185, cysteine 193, cysteine 196, and cysteine 199 each contribute to the Zn(2+) site.

It belongs to the QueC family. Requires Zn(2+) as cofactor.

The enzyme catalyses 7-carboxy-7-deazaguanine + NH4(+) + ATP = 7-cyano-7-deazaguanine + ADP + phosphate + H2O + H(+). It participates in purine metabolism; 7-cyano-7-deazaguanine biosynthesis. Its function is as follows. Catalyzes the ATP-dependent conversion of 7-carboxy-7-deazaguanine (CDG) to 7-cyano-7-deazaguanine (preQ(0)). This is 7-cyano-7-deazaguanine synthase from Ruegeria sp. (strain TM1040) (Silicibacter sp.).